The sequence spans 713 residues: NAD(+) hydrolase SARM1 (713 aa).

The stretch at 53-96 (DVQAVLDGSLPALRSAIRTLRSSKDTGDLEETRRAIAETFQLVE) is one ARM 1 repeat. Residues Trp99, Arg106, 145–153 (EQILVSENR), and 186–189 (HMFK) each bind NAD(+). ARM repeat units follow at residues 110-149 (EEIC…QILV), 151-189 (ENRD…HMFK), 192-231 (EETS…NCAM), 233-276 (GGHR…LAAN), 277-310 (REME…NMLD), 311-350 (SADS…VETS), and 355-398 (QRNT…EEVP). 2 consecutive SAM domains span residues 408 to 472 (WKSG…LKTY) and 478 to 537 (CDPN…ILSA). The 144-residue stretch at 552–695 (KGPDVFISYR…KILRFLEGCP (144 aa)) folds into the TIR domain. NAD(+) is bound by residues 561 to 562 (RR) and Glu591. Glu634 is an active-site residue.

It belongs to the SARM1 family. In terms of assembly, homooctamer; forms an octameric ring via SAM domains.

It is found in the cytoplasm. Its subcellular location is the cell projection. The protein localises to the axon. The protein resides in the dendrite. It localises to the synapse. It is found in the mitochondrion. The catalysed reaction is NAD(+) + H2O = ADP-D-ribose + nicotinamide + H(+). The enzyme catalyses NAD(+) = cyclic ADP-beta-D-ribose + nicotinamide + H(+). It carries out the reaction NADP(+) + H2O = ADP-D-ribose 2'-phosphate + nicotinamide + H(+). Autoinhibited: in the inactive state, the enzymatic TIR domain is held apart by the autoinhibiting ARM repeats. NAD(+)-binding to ARM repeats maintains an inactive state by promoting interaction between ARM repeats and the TIR domain, thereby facilitating inhibition of the enzymatic TIR domain. Following activation, possibly by nicotinamide mononucleotide (NMN), auto-inhibitory interactions are released, allowing self-association of the TIR domains and subsequent activation of the NAD(+) hydrolase (NADase) activity. Self-association of TIR domains is facilitated by the octamer of SAM domains. NAD(+) hydrolase, which plays a key role in axonal degeneration following injury by regulating NAD(+) metabolism. Acts as a negative regulator of MYD88- and TRIF-dependent toll-like receptor signaling pathway by promoting Wallerian degeneration, an injury-induced form of programmed subcellular death which involves degeneration of an axon distal to the injury site. Wallerian degeneration is triggerred by NAD(+) depletion: in response to injury, SARM1 is activated and catalyzes cleavage of NAD(+) into ADP-D-ribose (ADPR), cyclic ADPR (cADPR) and nicotinamide; NAD(+) cleavage promoting cytoskeletal degradation and axon destruction. Also able to hydrolyze NADP(+), but not other NAD(+)-related molecules. Can activate neuronal cell death in response to stress. The sequence is that of NAD(+) hydrolase SARM1 from Danio rerio (Zebrafish).